The primary structure comprises 143 residues: Transcriptional regulator MraZ (143 aa).

SpoVT-AbrB domains follow at residues 5–47 and 76–119; these read EYEH…TLEE and AIEV…DRET.

It belongs to the MraZ family. In terms of assembly, forms oligomers.

The protein resides in the cytoplasm. Its subcellular location is the nucleoid. In Staphylococcus haemolyticus (strain JCSC1435), this protein is Transcriptional regulator MraZ.